Consider the following 96-residue polypeptide: Cysteine proteinase (96 aa).

A disulfide bond links C25 and C79. Residues H31 and N58 contribute to the active site.

Belongs to the peptidase C1 family.

This Carica papaya (Papaya) protein is Cysteine proteinase.